The sequence spans 503 residues: Transcription termination/antitermination protein NusA (503 aa).

The region spanning 139–203 is the S1 motif domain; sequence GEIINGIVKR…KGPQIFLSRV (65 aa). In terms of domain architecture, KH spans 308-378; sequence RHKVEVVVSQ…LDVEEVIGQL (71 aa).

It belongs to the NusA family. As to quaternary structure, monomer. Binds directly to the core enzyme of the DNA-dependent RNA polymerase and to nascent RNA.

The protein localises to the cytoplasm. Participates in both transcription termination and antitermination. The polypeptide is Transcription termination/antitermination protein NusA (Rickettsia conorii (strain ATCC VR-613 / Malish 7)).